The primary structure comprises 170 residues: Bacilliredoxin SRU_1493 (170 aa).

The disordered stretch occupies residues 140–170 (CGDEEPPADAPSRPDPSSSGEGLPSTFQSIT).

It belongs to the bacilliredoxin family.

The chain is Bacilliredoxin SRU_1493 from Salinibacter ruber (strain DSM 13855 / M31).